We begin with the raw amino-acid sequence, 948 residues long: ELKS/Rab6-interacting/CAST family member 1 (948 aa).

A disordered region spans residues 1-54 (MYGSARSVGKVEPSSQSPGRSPRLPRSPRLGHRRTNSTGGSSGNSVGGGSGKTL). At Lys-10 the chain carries N6-acetyllysine. A compositionally biased stretch (low complexity) spans 13-28 (PSSQSPGRSPRLPRSP). 3 positions are modified to phosphoserine: Ser-17, Ser-21, and Ser-37. Position 38 is a phosphothreonine (Thr-38). A compositionally biased stretch (gly residues) spans 40-51 (GSSGNSVGGGSG). Phosphoserine occurs at positions 55, 75, 94, 796, and 937. Residues 144-920 (RQARDNTIMD…RMKLMADNYE (777 aa)) are a coiled coil. Residues 773-796 (KHKEQVEKKKSAQMLEEARRREDS) show a composition bias toward basic and acidic residues. Disordered stretches follow at residues 773–801 (KHKE…SDSS) and 903–948 (QLKQ…GIWA). A compositionally biased stretch (acidic residues) spans 939-948 (DQDEEEGIWA).

As to quaternary structure, interacts with the GTB-bound forms of RAB6A isoform 1 and isoform 2 and with RAB6B. The interaction was strongest with RAB6B, followed by RAB6A isoform 2 and weakest with RAB6A isoform 1. Part of a complex with CHUK, IKBKB and IKBKG. Interacts with CHUK, IKBKB and IKBKG. The interaction with IKBKG is independent of CHUK and IKBKB. Interacts with NFKBIA. Isoform 1 interacts through its C-terminus with the PDZ domains of RIMS1 and RIMS2. Interacts with ERC2/CAST1. Interacts with SDCCAG8. Part of a cortical microtubule stabilization complex (CMSC) composed of KANK1, PPFIA1, PPFIBP1, ERC1/ELKS, PHLDB2/LL5beta, CLASPs, KIF21A and possibly additional interactors; within CMSCs KANK1 and PHLDB2/LL5beta appear to be the core components for targeting of microtubule-binding proteins KIF21A and CLASPs, whereas PPFIA1, PPFIBP1 and ERC1/ELKS serve as scaffolds for protein clustering. Isoform 1 is specifically expressed in brain. A further probable isoform is widely expressed outside of brain It is referred to as ERC1a by PubMed:12391317 and characterized by a C-terminus identical to that of isoforms 1 in human and mouse.

It localises to the cytoplasm. The protein localises to the cytoskeleton. Its subcellular location is the microtubule organizing center. The protein resides in the centrosome. It is found in the membrane. It localises to the golgi apparatus membrane. The protein localises to the presynaptic active zone. Its subcellular location is the cell projection. The protein resides in the podosome. In terms of biological role, regulatory subunit of the IKK complex. Probably recruits IkappaBalpha/NFKBIA to the complex. May be involved in the organization of the cytomatrix at the nerve terminals active zone (CAZ) which regulates neurotransmitter release. May be involved in vesicle trafficking at the CAZ. May be involved in Rab-6 regulated endosomes to Golgi transport. In Rattus norvegicus (Rat), this protein is ELKS/Rab6-interacting/CAST family member 1 (Erc1).